The sequence spans 295 residues: sn-glycerol-3-phosphate transport system permease protein UgpA (295 aa).

Residues 1-11 (MSSSRPVFRSR) are Cytoplasmic-facing. Residues 12 to 32 (WLPYLLVAPQLIITVIFFIWP) traverse the membrane as a helical segment. The Periplasmic segment spans residues 33 to 80 (AGEALWYSLQSVDPFGFSSQFVGLDNFVTLFHDSYYLDAFWTTIKFST). Positions 76 to 284 (IKFSTFVTVS…FLVIVLTVVQ (209 aa)) constitute an ABC transmembrane type-1 domain. A helical membrane pass occupies residues 81-101 (FVTVSGLLVSLFFAALVEYIV). Over 102 to 109 (RGSRFYQT) the chain is Cytoplasmic. A helical transmembrane segment spans residues 110–130 (LMLLPYAVAPAVAAVLWIFLF). Residues 131–156 (NPGRGLITHFLAEFGYDWNHAQNSGQ) lie on the Periplasmic side of the membrane. Residues 157-177 (AMFLVVFASVWKQISYNFLFF) traverse the membrane as a helical segment. The Cytoplasmic portion of the chain corresponds to 178-207 (YAALQSIPRSLIEAAAIDGAGPIRRFFKIA). The helical transmembrane segment at 208-228 (LPLIAPVSFFLLVVNLVYAFF) threads the bilayer. Over 229–262 (DTFPVIDAATSGGPVQATTTLIYKIYREGFTGLD) the chain is Periplasmic. The chain crosses the membrane as a helical span at residues 263–283 (LASSAAQSVVLMFLVIVLTVV). Residues 284–295 (QFRYVESKVRYQ) are Cytoplasmic-facing.

The protein belongs to the binding-protein-dependent transport system permease family. UgpAE subfamily. As to quaternary structure, the complex is composed of two ATP-binding proteins (UgpC), two transmembrane proteins (UgpA and UgpE) and a solute-binding protein (UgpB).

The protein resides in the cell inner membrane. Its function is as follows. Part of the ABC transporter complex UgpBAEC involved in sn-glycerol-3-phosphate (G3P) import. Probably responsible for the translocation of the substrate across the membrane. This Escherichia coli (strain UTI89 / UPEC) protein is sn-glycerol-3-phosphate transport system permease protein UgpA (ugpA).